A 182-amino-acid chain; its full sequence is Peptide deformylase (182 aa).

Residues Cys110 and His153 each contribute to the Fe cation site. The active site involves Glu154. Fe cation is bound at residue His157.

The protein belongs to the polypeptide deformylase family. Fe(2+) serves as cofactor.

It catalyses the reaction N-terminal N-formyl-L-methionyl-[peptide] + H2O = N-terminal L-methionyl-[peptide] + formate. In terms of biological role, removes the formyl group from the N-terminal Met of newly synthesized proteins. Requires at least a dipeptide for an efficient rate of reaction. N-terminal L-methionine is a prerequisite for activity but the enzyme has broad specificity at other positions. The sequence is that of Peptide deformylase from Halalkalibacterium halodurans (strain ATCC BAA-125 / DSM 18197 / FERM 7344 / JCM 9153 / C-125) (Bacillus halodurans).